Reading from the N-terminus, the 284-residue chain is Nodulation protein O (284 aa).

The tract at residues 1-27 is disordered; that stretch reads MNIKGSDNGSFIKGSPENDIIDGGKKN. 5 Hemolysin-type calcium-binding repeats span residues 13 to 30, 31 to 48, 58 to 75, 94 to 111, and 112 to 129; these read KGSP…NDWI, DAGN…QDSI, WAGK…DDLL, HSGE…SDIL, and VAGD…GDAF. Residues D100, D109, D118, and D127 each coordinate Ca(2+). The interval 208 to 222 is export signal (aspartic acid box); the sequence is DRGFASAAAAATAID.

The protein resides in the secreted. Functionally, the NodO protein may play a role in nodule development by direct interaction with the root hair cells or some other plant surface in a calcium-dependent manner. The polypeptide is Nodulation protein O (nodO) (Rhizobium leguminosarum bv. viciae).